Consider the following 306-residue polypeptide: Protein YIPF1 (306 aa).

Residues 1-119 (MAAVDDLQFE…VRLYIRSNPD (119 aa)) lie on the Cytoplasmic side of the membrane. The disordered stretch occupies residues 14–62 (NAATSLTANPDATTVNIEDPGETPKHQSGSPRGSGREEDDELLGNDDSD). Over residues 15–29 (AATSLTANPDATTVN) the composition is skewed to polar residues. A compositionally biased stretch (acidic residues) spans 50–59 (EEDDELLGND). Residues 120–140 (LYGPFWICATLVFAIAISGNL) form a helical membrane-spanning segment. Residues 141-162 (SNFLIHLGEKTYRYVPEFRKVS) are Lumenal-facing. A helical membrane pass occupies residues 163 to 183 (IAATTIYAYAWLVPLALWGFL). The Cytoplasmic segment spans residues 184–200 (MWRNSKVMNIVSYSFLE). Residues 201–221 (IVCVYGYSLFIYIPTAILWII) form a helical membrane-spanning segment. Topologically, residues 222–227 (PQKAVR) are lumenal. The helical transmembrane segment at 228-248 (WILVMIALGISGSVLAMTFWP) threads the bilayer. The Cytoplasmic portion of the chain corresponds to 249 to 256 (AVREDNRR). Residues 257–277 (VALATIVTIVLLHMLLSVGCL) traverse the membrane as a helical segment. Residues 278–306 (AYFFDAPEMDHLPTTTATPNQTVAAAKSS) are Lumenal-facing. N-linked (GlcNAc...) asparagine glycosylation is present at Asn297.

The protein belongs to the YIP1 family. Interacts with YIPF6; this interaction may stabilize YIPF1. May also form a ternary complex with YIPF2 and YIPF6.

The protein localises to the golgi apparatus. The protein resides in the cis-Golgi network membrane. It is found in the trans-Golgi network membrane. Its subcellular location is the late endosome membrane. This is Protein YIPF1 (YIPF1) from Pongo abelii (Sumatran orangutan).